The sequence spans 190 residues: MEKEKVLEIFEKLEVINKGHFLLSSGKHSDTYLQCAKIFQYPNYSEIFSRELAEKFKGYRIDVVIGPAIGGIILAYEVARQIGVRALFAEREDNVMKLRRGFEISKGERVLVVEDVVTTGGSVKEVIELVRSLGGEVIGVGTIVDRSDGKIDFGVPFESIVKLQIKTYEKEECPLCKEGIPLVKPGSRKL.

Residue 114 to 122 participates in 5-phospho-alpha-D-ribose 1-diphosphate binding; that stretch reads EDVVTTGGS. Residues T118 and R146 each contribute to the orotate site.

Belongs to the purine/pyrimidine phosphoribosyltransferase family. PyrE subfamily. Homodimer. Mg(2+) serves as cofactor.

It carries out the reaction orotidine 5'-phosphate + diphosphate = orotate + 5-phospho-alpha-D-ribose 1-diphosphate. Its pathway is pyrimidine metabolism; UMP biosynthesis via de novo pathway; UMP from orotate: step 1/2. Catalyzes the transfer of a ribosyl phosphate group from 5-phosphoribose 1-diphosphate to orotate, leading to the formation of orotidine monophosphate (OMP). This is Orotate phosphoribosyltransferase from Caldanaerobacter subterraneus subsp. tengcongensis (strain DSM 15242 / JCM 11007 / NBRC 100824 / MB4) (Thermoanaerobacter tengcongensis).